We begin with the raw amino-acid sequence, 344 residues long: Endoplasmic reticulum junction formation protein lunapark-1 (344 aa).

Residues Met-1–Thr-39 lie on the Cytoplasmic side of the membrane. A helical transmembrane segment spans residues Leu-40 to Leu-60. At Arg-61–Thr-68 the chain is on the lumenal side. The chain crosses the membrane as a helical span at residues Tyr-69–Ile-89. Over Asn-90–Ser-344 the chain is Cytoplasmic. Residues Asp-116–Ala-140 are a coiled coil. Disordered stretches follow at residues Glu-136–Lys-155 and Gln-171–Asp-192. Positions Ala-140 to Lys-155 are enriched in polar residues. Residues Cys-239–Cys-264 form a C4-type; plays a role in ER morphology zinc finger. The disordered stretch occupies residues Pro-275–Ser-344. Positions Pro-312–Gly-326 are enriched in polar residues. Residues Ser-327–Ser-344 show a composition bias toward basic and acidic residues.

It belongs to the lunapark family.

The protein resides in the endoplasmic reticulum membrane. Its function is as follows. Plays a role in tubular endoplasmic reticulum network formation and maintenance. May be involved in central nervous system development. Has a presynaptic role in neurotransmission. Likely to operate in synaptogenesis by regulating vesicular transport or localization. Required for correct localization of rab-3 and snb-1. The protein is Endoplasmic reticulum junction formation protein lunapark-1 of Caenorhabditis briggsae.